Here is a 353-residue protein sequence, read N- to C-terminus: Photosystem II D2 protein (353 aa).

Thr-2 carries the post-translational modification N-acetylthreonine. Thr-2 carries the phosphothreonine modification. A helical transmembrane segment spans residues 41–61; it reads CAYFALGGWFTGTTFVTSWYT. His-118 is a binding site for chlorophyll a. A helical membrane pass occupies residues 125–141; that stretch reads GFMLRQFELARSVQLRP. Residues Gln-130 and Asn-143 each contribute to the pheophytin a site. The chain crosses the membrane as a helical span at residues 153-166; the sequence is VFVSVFLIYPLGQS. Residue His-198 coordinates chlorophyll a. Residues 208 to 228 traverse the membrane as a helical segment; sequence AALLCAIHGATVENTLFEDGD. 2 residues coordinate a plastoquinone: His-215 and Phe-262. Residue His-215 coordinates Fe cation. Position 269 (His-269) interacts with Fe cation. A helical membrane pass occupies residues 279–295; that stretch reads GLWMSALGVVGLALNLR.

The protein belongs to the reaction center PufL/M/PsbA/D family. As to quaternary structure, PSII is composed of 1 copy each of membrane proteins PsbA, PsbB, PsbC, PsbD, PsbE, PsbF, PsbH, PsbI, PsbJ, PsbK, PsbL, PsbM, PsbT, PsbX, PsbY, PsbZ, Psb30/Ycf12, at least 3 peripheral proteins of the oxygen-evolving complex and a large number of cofactors. It forms dimeric complexes. The cofactor is The D1/D2 heterodimer binds P680, chlorophylls that are the primary electron donor of PSII, and subsequent electron acceptors. It shares a non-heme iron and each subunit binds pheophytin, quinone, additional chlorophylls, carotenoids and lipids. There is also a Cl(-1) ion associated with D1 and D2, which is required for oxygen evolution. The PSII complex binds additional chlorophylls, carotenoids and specific lipids..

It is found in the plastid. The protein localises to the chloroplast thylakoid membrane. It carries out the reaction 2 a plastoquinone + 4 hnu + 2 H2O = 2 a plastoquinol + O2. Photosystem II (PSII) is a light-driven water:plastoquinone oxidoreductase that uses light energy to abstract electrons from H(2)O, generating O(2) and a proton gradient subsequently used for ATP formation. It consists of a core antenna complex that captures photons, and an electron transfer chain that converts photonic excitation into a charge separation. The D1/D2 (PsbA/PsbD) reaction center heterodimer binds P680, the primary electron donor of PSII as well as several subsequent electron acceptors. D2 is needed for assembly of a stable PSII complex. In Spinacia oleracea (Spinach), this protein is Photosystem II D2 protein.